Reading from the N-terminus, the 511-residue chain is Histidine ammonia-lyase (511 aa).

Residues 142–144 (ASG) constitute a cross-link (5-imidazolinone (Ala-Gly)). S143 bears the 2,3-didehydroalanine (Ser) mark.

This sequence belongs to the PAL/histidase family. In terms of processing, contains an active site 4-methylidene-imidazol-5-one (MIO), which is formed autocatalytically by cyclization and dehydration of residues Ala-Ser-Gly.

The protein resides in the cytoplasm. It carries out the reaction L-histidine = trans-urocanate + NH4(+). Its pathway is amino-acid degradation; L-histidine degradation into L-glutamate; N-formimidoyl-L-glutamate from L-histidine: step 1/3. The chain is Histidine ammonia-lyase from Brucella ovis (strain ATCC 25840 / 63/290 / NCTC 10512).